The primary structure comprises 191 residues: Adenylate kinase (191 aa).

12–17 (GSGKTT) provides a ligand contact to ATP. The segment at 34-63 (STGDLLRAESAKKTERGLLIEKFTSQGELV) is NMP. AMP contacts are provided by residues Thr-35, Arg-40, 61-63 (ELV), 88-91 (GYPR), and Gln-95. The LID stretch occupies residues 130-136 (GRSRGAD). Arg-131 serves as a coordination point for ATP. AMP is bound by residues Arg-133 and Arg-145. Arg-173 serves as a coordination point for ATP.

The protein belongs to the adenylate kinase family. Monomer.

It localises to the cytoplasm. It carries out the reaction AMP + ATP = 2 ADP. The protein operates within purine metabolism; AMP biosynthesis via salvage pathway; AMP from ADP: step 1/1. Its function is as follows. Catalyzes the reversible transfer of the terminal phosphate group between ATP and AMP. Plays an important role in cellular energy homeostasis and in adenine nucleotide metabolism. This is Adenylate kinase from Helicobacter pylori (strain G27).